Reading from the N-terminus, the 224-residue chain is MTLKNKSIVVLLSGGLDSSTVTSIAKKSEAKIFGLSFDYGQRHKKELHSASTIAKHFDIQEFKIIKLDLSLWGGSSLTDTKKNIPTEGVQTNKIPNTYVPGRNTIFISVALSYAEAIDADFIGLGVNALDYSGYPDCRPDYIKKFQELADLANKRGRENNPIKLWTPLLDLNKEQIIQLAMDNHVPLDKTWSCYSGDAKPCGKCDSCRIRNTAYKKWLNNKNKK.

12-22 (LSGGLDSSTVT) contributes to the ATP binding site. Positions 193, 201, 204, and 207 each coordinate Zn(2+).

The protein belongs to the QueC family. The cofactor is Zn(2+).

It carries out the reaction 7-carboxy-7-deazaguanine + NH4(+) + ATP = 7-cyano-7-deazaguanine + ADP + phosphate + H2O + H(+). The protein operates within purine metabolism; 7-cyano-7-deazaguanine biosynthesis. Catalyzes the ATP-dependent conversion of 7-carboxy-7-deazaguanine (CDG) to 7-cyano-7-deazaguanine (preQ(0)). This Prochlorococcus marinus (strain MIT 9312) protein is 7-cyano-7-deazaguanine synthase.